A 443-amino-acid polypeptide reads, in one-letter code: Methyl-coenzyme M reductase II subunit beta (443 aa).

Residue tyrosine 367 coordinates coenzyme M. Position 369 (glycine 369) interacts with coenzyme B.

It belongs to the methyl-coenzyme M reductase beta subunit family. As to quaternary structure, MCR is a hexamer of two alpha, two beta, and two gamma chains, forming a dimer of heterotrimers. Requires coenzyme F430 as cofactor.

It carries out the reaction coenzyme B + methyl-coenzyme M = methane + coenzyme M-coenzyme B heterodisulfide. The protein operates within one-carbon metabolism; methyl-coenzyme M reduction; methane from methyl-coenzyme M: step 1/1. Functionally, component of the methyl-coenzyme M reductase (MCR) I that catalyzes the reductive cleavage of methyl-coenzyme M (CoM-S-CH3 or 2-(methylthio)ethanesulfonate) using coenzyme B (CoB or 7-mercaptoheptanoylthreonine phosphate) as reductant which results in the production of methane and the mixed heterodisulfide of CoB and CoM (CoM-S-S-CoB). This is the final step in methanogenesis. This Methanothermobacter marburgensis (strain ATCC BAA-927 / DSM 2133 / JCM 14651 / NBRC 100331 / OCM 82 / Marburg) (Methanobacterium thermoautotrophicum) protein is Methyl-coenzyme M reductase II subunit beta.